The sequence spans 391 residues: ETS-related transcription factor Elf-3 (391 aa).

The region spanning 65–151 is the PNT domain; sequence DPLAVLHLAE…AQLRDLTSNS (87 aa). The tract at residues 200-271 is disordered; sequence YCSTYGPGAP…HGKRKRGRPR (72 aa). Polar residues predominate over residues 211-229; sequence PGSSDVSTARTATPQSSHA. Residues 242 to 261 show a composition bias toward basic and acidic residues; it reads TESKVFPRDGFPDYKKGEPK. Residues 262-271 are compositionally biased toward basic residues; it reads HGKRKRGRPR. Residues 293-375 constitute a DNA-binding region (ETS); that stretch reads THLWEFIRDI…DGRRLVYKFG (83 aa).

The protein belongs to the ETS family. As to quaternary structure, interacts with TBP. Interacts with CREBBP and EP300; these act as transcriptional coactivators of ELF3 and positively modulate its function. Interacts with XRCC5/KU86 and XRCC6/KU70; these inhibit the ability of ELF3 to bind DNA and negatively modulate its transcriptional activity. Associated with CLND7 and POU2F3. Interacts with ZNF768. In terms of tissue distribution, expressed in small intestine, colon, lung, kidney and uterus. Also expressed in the corneal epithelium and conjunctiva of the developing and adult eye. Not detected in liver, spleen, thymus, brain, heart, skeletal muscle or ovary.

The protein resides in the cytoplasm. The protein localises to the nucleus. In terms of biological role, transcriptional activator that binds and transactivates ETS sequences containing the consensus nucleotide core sequence GGA[AT]. Acts synergistically with POU2F3 to transactivate the SPRR2A promoter and with RUNX1 to transactivate the ANGPT1 promoter. Also transactivates collagenase, CCL20, CLND7, FLG, KRT8, NOS2, PTGS2, SPRR2B, TGFBR2 and TGM3 promoters. Represses KRT4 promoter activity. Involved in mediating vascular inflammation. May play an important role in epithelial cell differentiation and tumorigenesis. May be a critical downstream effector of the ERBB2 signaling pathway. May be associated with mammary gland development and involution. Plays an important role in the regulation of transcription with TATA-less promoters in preimplantation embryos, which is essential in preimplantation development. The chain is ETS-related transcription factor Elf-3 from Mus musculus (Mouse).